The following is a 341-amino-acid chain: Retinol dehydrogenase 10-B (341 aa).

A helical; Signal-anchor membrane pass occupies residues 3–23; the sequence is IVLEFFLVTFRVLWAFVLAAA. 40-64 is an NADP(+) binding site; it reads LITGAGSGLGRLFALEFARRRAQLV. Serine 197 lines the substrate pocket. Tyrosine 210 serves as the catalytic Proton acceptor.

This sequence belongs to the short-chain dehydrogenases/reductases (SDR) family.

The protein resides in the microsome membrane. It is found in the endoplasmic reticulum membrane. It catalyses the reaction all-trans-retinol + NADP(+) = all-trans-retinal + NADPH + H(+). It participates in cofactor metabolism; retinol metabolism. Retinol dehydrogenase with a clear preference for NADP. Converts all-trans-retinol to all-trans-retinal. Has no detectable activity towards 11-cis-retinol, 9-cis-retinol and 13-cis-retinol. This chain is Retinol dehydrogenase 10-B (rdh10-b), found in Xenopus laevis (African clawed frog).